Here is a 130-residue protein sequence, read N- to C-terminus: Small ribosomal subunit protein uS8 (130 aa).

This sequence belongs to the universal ribosomal protein uS8 family. Part of the 30S ribosomal subunit.

Functionally, one of the primary rRNA binding proteins, it binds directly to 16S rRNA central domain where it helps coordinate assembly of the platform of the 30S subunit. The protein is Small ribosomal subunit protein uS8 of Nitrosopumilus maritimus (strain SCM1).